The primary structure comprises 214 residues: DELTA-actitoxin-Aeq1a (214 aa).

An N-terminal signal peptide occupies residues 1–19 (MSRLIIVFIVVTMICSATA). The propeptide occupies 20–35 (LPSKKIIDEDEEDEKR). Positions 38 to 47 (DVAGAVIDGA) are plays an important role in the hemolytic activity. The tract at residues 46-65 (GASLSFDILKTVLEALGNVK) is N-terminal region. Positions 89, 122, 140, 142, 168, 172, and 173 each coordinate phosphocholine. The trp-rich region, which is important for the binding to lipid membrane stretch occupies residues 140–155 (SVPYDYNWYSNWWNVR). A Cell attachment site, crucial for protein stability motif is present at residues 179–181 (RGD).

It belongs to the actinoporin family. Sea anemone subfamily. In terms of assembly, octamer or nonamer in membranes. Monomer in the soluble state.

It localises to the secreted. The protein resides in the nematocyst. Its subcellular location is the target cell membrane. Pore-forming protein that forms cations-selective hydrophilic pores of around 1 nm and causes cardiac stimulation and cytolysis. Pore formation is a multi-step process that involves specific recognition of membrane sphingomyelin (but neither cholesterol nor phosphatidylcholine) using aromatic rich region and adjacent phosphocholine (POC) binding site, firm binding to the membrane (mainly driven by hydrophobic interactions) accompanied by the transfer of the N-terminal region to the lipid-water interface and finally pore formation after oligomerization of monomers. Cytolytic effects include red blood cells hemolysis, platelet aggregation and lysis, cytotoxic and cytostatic effects on fibroblasts. Lethality in mammals has been ascribed to severe vasospasm of coronary vessels, cardiac arrhythmia, and inotropic effects. The sequence is that of DELTA-actitoxin-Aeq1a from Actinia equina (Beadlet anemone).